Reading from the N-terminus, the 149-residue chain is Nucleoside diphosphate kinase (149 aa).

Residues K9, F57, R85, T91, R102, and N112 each coordinate ATP. H115 functions as the Pros-phosphohistidine intermediate in the catalytic mechanism.

It belongs to the NDK family. In terms of assembly, homotetramer. It depends on Mg(2+) as a cofactor.

The protein localises to the cytoplasm. It carries out the reaction a 2'-deoxyribonucleoside 5'-diphosphate + ATP = a 2'-deoxyribonucleoside 5'-triphosphate + ADP. The catalysed reaction is a ribonucleoside 5'-diphosphate + ATP = a ribonucleoside 5'-triphosphate + ADP. In terms of biological role, major role in the synthesis of nucleoside triphosphates other than ATP. The ATP gamma phosphate is transferred to the NDP beta phosphate via a ping-pong mechanism, using a phosphorylated active-site intermediate. This chain is Nucleoside diphosphate kinase, found in Staphylococcus aureus (strain MSSA476).